A 508-amino-acid polypeptide reads, in one-letter code: Photosystem II CP47 reaction center protein (508 aa).

The next 6 helical transmembrane spans lie at 21–36 (SVHI…WAGS), 101–115 (IVFS…IWHW), 140–156 (GIHL…FGAF), 203–218 (IAAG…FHLS), 237–252 (VLSS…AFVV), and 457–472 (TFAL…HGAR).

The protein belongs to the PsbB/PsbC family. PsbB subfamily. In terms of assembly, PSII is composed of 1 copy each of membrane proteins PsbA, PsbB, PsbC, PsbD, PsbE, PsbF, PsbH, PsbI, PsbJ, PsbK, PsbL, PsbM, PsbT, PsbX, PsbY, PsbZ, Psb30/Ycf12, at least 3 peripheral proteins of the oxygen-evolving complex and a large number of cofactors. It forms dimeric complexes. Requires Binds multiple chlorophylls. PSII binds additional chlorophylls, carotenoids and specific lipids. as cofactor.

It is found in the plastid. Its subcellular location is the chloroplast thylakoid membrane. One of the components of the core complex of photosystem II (PSII). It binds chlorophyll and helps catalyze the primary light-induced photochemical processes of PSII. PSII is a light-driven water:plastoquinone oxidoreductase, using light energy to abstract electrons from H(2)O, generating O(2) and a proton gradient subsequently used for ATP formation. This chain is Photosystem II CP47 reaction center protein, found in Oryza nivara (Indian wild rice).